The primary structure comprises 96 residues: Large ribosomal subunit protein uL23 (96 aa).

The protein belongs to the universal ribosomal protein uL23 family. Part of the 50S ribosomal subunit. Contacts protein L29, and trigger factor when it is bound to the ribosome.

Its function is as follows. One of the early assembly proteins it binds 23S rRNA. One of the proteins that surrounds the polypeptide exit tunnel on the outside of the ribosome. Forms the main docking site for trigger factor binding to the ribosome. The chain is Large ribosomal subunit protein uL23 from Brevibacillus brevis (strain 47 / JCM 6285 / NBRC 100599).